The primary structure comprises 199 residues: MSCMPVSTKCNDIWVDFSCTGPSISELQKKEPKAWAAILRSHTNQQTAEDDNIIGSICDKQGLCSKDEYAYSQYCACVNSGTLWAECAFAPCNGNKNAYKTTEHRNILTNKQCPSGLTICQNIAEYGGSGNISDLYQNFNCNSVINTFLINVMNHPFLTLILIILILIIIYRLMPSSGGKHNDDKLPPPSLIFSNLNNF.

The helical transmembrane segment at 150–170 (INVMNHPFLTLILIILILIII) threads the bilayer.

This sequence belongs to the asfivirus E199L family. In terms of assembly, interacts with host PYCR2; this interaction results in autophagy activation. Contains intramolecular disulfide bonds.

It is found in the virion membrane. The protein localises to the host membrane. Its function is as follows. Essential for viral fusion with host endosomal membrane and core release. Not required for virus morphogenesis and egress. Induces complete autophagy through the interaction with and down-regulation of host PYCR2. The protein is Inner membrane protein E199L of Ornithodoros (relapsing fever ticks).